Consider the following 237-residue polypeptide: MTKSQNVDPAEIKKFEDMASRWWDLEGEFKPLHQINPLRLNYVLEKTEGLFGKKVLDVGCGGGILAESMAVEGAVVTGLDMGKEPLEVARLHALETGTKLDYIQSTIEDHAEQNPQAYDVVTCMEMLEHVPDPQSVITACSKLVKPGGHVFFSTLNRNFKSYLFAIVGAEKLLKIVPEGTHDHEKFIRPAELIKMIDNTPLQELGITGLHYNPLTDTYRLGTNVDVNYIVHTQNLTQ.

S-adenosyl-L-methionine contacts are provided by R39, G59, D80, and M124.

This sequence belongs to the methyltransferase superfamily. UbiG/COQ3 family.

The enzyme catalyses a 3-demethylubiquinol + S-adenosyl-L-methionine = a ubiquinol + S-adenosyl-L-homocysteine + H(+). The catalysed reaction is a 3-(all-trans-polyprenyl)benzene-1,2-diol + S-adenosyl-L-methionine = a 2-methoxy-6-(all-trans-polyprenyl)phenol + S-adenosyl-L-homocysteine + H(+). It participates in cofactor biosynthesis; ubiquinone biosynthesis. Functionally, O-methyltransferase that catalyzes the 2 O-methylation steps in the ubiquinone biosynthetic pathway. This is Ubiquinone biosynthesis O-methyltransferase from Vibrio atlanticus (strain LGP32) (Vibrio splendidus (strain Mel32)).